The following is a 440-amino-acid chain: Chromosomal replication initiator protein DnaA (440 aa).

The domain I, interacts with DnaA modulators stretch occupies residues 1–69; it reads MKERILQEIK…VKVVLGNDAT (69 aa). Residues 69-96 are domain II; the sequence is TFEITYEAFEPHSSYSEPLVKKRAVLLT. Residues 97–313 are domain III, AAA+ region; that stretch reads PLNPDYTFEN…GAIIKLLVYK (217 aa). Glycine 140, glycine 142, lysine 143, and threonine 144 together coordinate ATP. Positions 314–440 are domain IV, binds dsDNA; it reads ETTGKEVDLR…GEISKRALSG (127 aa).

The protein belongs to the DnaA family. Oligomerizes as a right-handed, spiral filament on DNA at oriC.

The protein localises to the cytoplasm. Functionally, plays an essential role in the initiation and regulation of chromosomal replication. ATP-DnaA binds to the origin of replication (oriC) to initiate formation of the DNA replication initiation complex once per cell cycle. Binds the DnaA box (a 9 base pair repeat at the origin) and separates the double-stranded (ds)DNA. Forms a right-handed helical filament on oriC DNA; dsDNA binds to the exterior of the filament while single-stranded (ss)DNA is stabiized in the filament's interior. The ATP-DnaA-oriC complex binds and stabilizes one strand of the AT-rich DNA unwinding element (DUE), permitting loading of DNA polymerase. After initiation quickly degrades to an ADP-DnaA complex that is not apt for DNA replication. Binds acidic phospholipids. In Thermotoga petrophila (strain ATCC BAA-488 / DSM 13995 / JCM 10881 / RKU-1), this protein is Chromosomal replication initiator protein DnaA.